A 344-amino-acid chain; its full sequence is Selenide, water dikinase (344 aa).

Cys16 is an active-site residue. Residues Lys19 and 47 to 49 (SRD) contribute to the ATP site. Asp50 is a Mg(2+) binding site. Residues Asp67, Asp90, and 138–140 (GHS) contribute to the ATP site. Position 90 (Asp90) interacts with Mg(2+). Position 226 (Asp226) interacts with Mg(2+).

This sequence belongs to the selenophosphate synthase 1 family. Class I subfamily. Homodimer. The cofactor is Mg(2+).

It catalyses the reaction hydrogenselenide + ATP + H2O = selenophosphate + AMP + phosphate + 2 H(+). In terms of biological role, synthesizes selenophosphate from selenide and ATP. This Pseudomonas aeruginosa (strain ATCC 15692 / DSM 22644 / CIP 104116 / JCM 14847 / LMG 12228 / 1C / PRS 101 / PAO1) protein is Selenide, water dikinase.